Consider the following 299-residue polypeptide: MNVTRLYFRVAGTKQFARYVHKYAAYSSTSFQKKKSHFPSPATLDHPDAGEDAFINLRNENYILNAVFDGVGGWANVGIDPSIFSWGLVREIKKVFNNSDEFQPSPLTLLSKAYAALKKSNTVEAGSSTACLTLFNCGNGKLHSLNLGDSGFLILRNGAIHYASPAQVLQFNMPYQLAIYPRNYRSAENIGPKMGQATVHDLKDNDLVILATDGIFDNIEEKSILDIAGVVDFSSLSNVQKCLDDLAMRICRQAVLNSLDTKWESPFAKTAKSFGFKFQGGKVDDTTITCLLIKSKNYE.

In terms of domain architecture, PPM-type phosphatase spans 35-293 (KSHFPSPATL…DDTTITCLLI (259 aa)).

Functionally, confers azacytidine resistance in high copy. In Schizosaccharomyces pombe (strain 972 / ATCC 24843) (Fission yeast), this protein is 5-azacytidine resistance protein azr1 (azr1).